Consider the following 51-residue polypeptide: Sperm protamine P1 (51 aa).

Intrachain disulfides connect cysteine 7–cysteine 15 and cysteine 40–cysteine 48.

Belongs to the protamine P1 family. In terms of assembly, cross-linked by interchain disulfide bonds around the DNA-helix. Post-translationally, phosphorylated by SRPK1. As to expression, testis.

The protein localises to the nucleus. It is found in the chromosome. Protamines substitute for histones in the chromatin of sperm during the haploid phase of spermatogenesis. They compact sperm DNA into a highly condensed, stable and inactive complex. The protein is Sperm protamine P1 (PRM1) of Bos taurus (Bovine).